We begin with the raw amino-acid sequence, 466 residues long: 3-isopropylmalate dehydratase large subunit (466 aa).

C347, C407, and C410 together coordinate [4Fe-4S] cluster.

This sequence belongs to the aconitase/IPM isomerase family. LeuC type 1 subfamily. Heterodimer of LeuC and LeuD. [4Fe-4S] cluster is required as a cofactor.

The catalysed reaction is (2R,3S)-3-isopropylmalate = (2S)-2-isopropylmalate. Its pathway is amino-acid biosynthesis; L-leucine biosynthesis; L-leucine from 3-methyl-2-oxobutanoate: step 2/4. Catalyzes the isomerization between 2-isopropylmalate and 3-isopropylmalate, via the formation of 2-isopropylmaleate. In Escherichia coli O17:K52:H18 (strain UMN026 / ExPEC), this protein is 3-isopropylmalate dehydratase large subunit.